Here is a 207-residue protein sequence, read N- to C-terminus: Urease accessory protein UreE (207 aa).

The disordered stretch occupies residues 171–207 (HHGHAHSHSHSHDHDHDHDHDHQHGPGCAHGHGHDHH). Positions 180-194 (HSHDHDHDHDHDHQH) are enriched in basic and acidic residues.

It belongs to the UreE family.

It localises to the cytoplasm. Functionally, involved in urease metallocenter assembly. Binds nickel. Probably functions as a nickel donor during metallocenter assembly. This is Urease accessory protein UreE from Burkholderia lata (strain ATCC 17760 / DSM 23089 / LMG 22485 / NCIMB 9086 / R18194 / 383).